The primary structure comprises 452 residues: Probable ECA polymerase (452 aa).

11 helical membrane-spanning segments follow: residues 6-26 (FSGL…LTWF), 37-57 (VFFS…TSVL), 63-83 (VGVA…CFYG), 118-138 (VILM…NGFL), 155-175 (GVAL…VYFL), 181-201 (AWLF…MIVG), 207-227 (IIIA…ISLW), 228-248 (MLAA…LKRY), 341-361 (LVVM…GMII), 378-398 (YKAA…IVLA), and 410-430 (VFFL…FWLF).

It belongs to the WzyE family. In terms of assembly, probably part of a complex composed of WzxE, WzyE and WzzE.

The protein localises to the cell inner membrane. The protein operates within bacterial outer membrane biogenesis; enterobacterial common antigen biosynthesis. Functionally, probably involved in the polymerization of enterobacterial common antigen (ECA) trisaccharide repeat units. This Salmonella newport (strain SL254) protein is Probable ECA polymerase.